A 289-amino-acid polypeptide reads, in one-letter code: 4-diphosphocytidyl-2-C-methyl-D-erythritol kinase (289 aa).

Residue lysine 10 is part of the active site. Proline 94–serine 104 lines the ATP pocket. Aspartate 136 is a catalytic residue.

The protein belongs to the GHMP kinase family. IspE subfamily.

The enzyme catalyses 4-CDP-2-C-methyl-D-erythritol + ATP = 4-CDP-2-C-methyl-D-erythritol 2-phosphate + ADP + H(+). It participates in isoprenoid biosynthesis; isopentenyl diphosphate biosynthesis via DXP pathway; isopentenyl diphosphate from 1-deoxy-D-xylulose 5-phosphate: step 3/6. Catalyzes the phosphorylation of the position 2 hydroxy group of 4-diphosphocytidyl-2C-methyl-D-erythritol. The sequence is that of 4-diphosphocytidyl-2-C-methyl-D-erythritol kinase from Bacillus velezensis (strain DSM 23117 / BGSC 10A6 / LMG 26770 / FZB42) (Bacillus amyloliquefaciens subsp. plantarum).